Consider the following 313-residue polypeptide: Olfactory receptor 4Q3 (313 aa).

Residues 1-25 (MKKEQDSNVTEFVLLGLSSSWELQL) lie on the Extracellular side of the membrane. Residue Asn8 is glycosylated (N-linked (GlcNAc...) asparagine). The helical transmembrane segment at 26–49 (FLFLLFLFFYIAIVLGNLLIVVTV) threads the bilayer. Residues 50–58 (QAHAHLLQS) are Cytoplasmic-facing. The chain crosses the membrane as a helical span at residues 59–80 (PMYYFLGHLSFIDLCLSCVTVP). Topologically, residues 81 to 101 (KMLGDFLQQGKSISFSGCLAQ) are extracellular. Cys98 and Cys190 are joined by a disulfide. The chain crosses the membrane as a helical span at residues 102–121 (IYFLHFLGASEMFLLTVMAY). At 122–140 (DRYVAICNPLRYLTVMNPQ) the chain is on the cytoplasmic side. A helical membrane pass occupies residues 141 to 159 (LCLWLVLACWCGGFIHSIM). At 160–196 (QVILVIQLPFCGPNELDNFYCDVPQVIKLACMDTYVV) the chain is on the extracellular side. A helical membrane pass occupies residues 197-220 (EVLVIANSGLLSLVCFLVLLFSYA). Residues 221 to 236 (IILITLRTHFCQGQNK) lie on the Cytoplasmic side of the membrane. The helical transmembrane segment at 237–259 (VFSTCASHLTVVSLIFVPCVFIY) threads the bilayer. Topologically, residues 260–270 (LRPFCSFSVDK) are extracellular. A helical transmembrane segment spans residues 271–290 (IFSLFYTVITPMLNPLIYTL). Topologically, residues 291 to 313 (RNTDMKTAMKKLRIKPCGIPLPC) are cytoplasmic.

The protein belongs to the G-protein coupled receptor 1 family.

Its subcellular location is the cell membrane. Odorant receptor. This Homo sapiens (Human) protein is Olfactory receptor 4Q3 (OR4Q3).